The sequence spans 230 residues: NAD(P)H-hydrate epimerase (230 aa).

In terms of domain architecture, YjeF N-terminal spans Ala11–Leu218. Asn61 to Asp65 is a (6S)-NADPHX binding site. Positions 62 and 126 each coordinate K(+). Residues Gly130–Pro136 and Asp159 contribute to the (6S)-NADPHX site. Ser162 contributes to the K(+) binding site.

The protein belongs to the NnrE/AIBP family. It depends on K(+) as a cofactor.

The catalysed reaction is (6R)-NADHX = (6S)-NADHX. It catalyses the reaction (6R)-NADPHX = (6S)-NADPHX. Catalyzes the epimerization of the S- and R-forms of NAD(P)HX, a damaged form of NAD(P)H that is a result of enzymatic or heat-dependent hydration. This is a prerequisite for the S-specific NAD(P)H-hydrate dehydratase to allow the repair of both epimers of NAD(P)HX. The chain is NAD(P)H-hydrate epimerase from Drosophila sechellia (Fruit fly).